The following is a 551-amino-acid chain: Hyaluronan synthase 2 (551 aa).

Residues 1-11 (MHCERFICILR) are Cytoplasmic-facing. Residues 12 to 32 (IIGTTLFGVSLLLGISAAYIV) traverse the membrane as a helical segment. Residues 33 to 45 (GYQFIQTDNYYFS) lie on the Extracellular side of the membrane. The chain crosses the membrane as a helical span at residues 46-66 (FGLYGAILALHLIIQSLFAFL). At 67–374 (EHRKMKRSLE…NSLWFHKHHL (308 aa)) the chain is on the cytoplasmic side. A helical membrane pass occupies residues 375-395 (WMTYEAVITGFFPFFLIATVI). Residues 396–402 (QLFYRGR) are Extracellular-facing. The chain crosses the membrane as a helical span at residues 403-423 (IWNILLFLLTVQLVGLIKSSF). Residues 424–429 (ASALRG) lie on the Cytoplasmic side of the membrane. A helical membrane pass occupies residues 430 to 450 (NIVMVFMSFYSVLYMSSLLPA). The Extracellular segment spans residues 451-470 (KMFAIATINKAGWGTSGRKT). The helical transmembrane segment at 471–491 (IVVNFIGLIPITVWFTILLGG) threads the bilayer. Over 492-509 (VCYTIWRETKKPFSESEK) the chain is Cytoplasmic. The chain crosses the membrane as a helical span at residues 510 to 530 (IVLAVGAILYACYWVMLLTMY). Topologically, residues 531–551 (VSLVMKCGRRRKEPQHDLVLA) are extracellular.

It belongs to the NodC/HAS family. Homodimer; dimerization promotes enzymatic activity. The cofactor is Mg(2+).

Its subcellular location is the cell membrane. The protein resides in the endoplasmic reticulum membrane. It is found in the vesicle. It localises to the golgi apparatus membrane. The protein localises to the lysosome. It catalyses the reaction [hyaluronan](n) + UDP-N-acetyl-alpha-D-glucosamine = N-acetyl-beta-D-glucosaminyl-(1-&gt;4)-[hyaluronan](n) + UDP + H(+). It carries out the reaction N-acetyl-beta-D-glucosaminyl-(1-&gt;4)-[hyaluronan](n) + UDP-alpha-D-glucuronate = [hyaluronan](n+1) + UDP + H(+). It participates in glycan biosynthesis; hyaluronan biosynthesis. Its function is as follows. Catalyzes the addition of GlcNAc or GlcUA monosaccharides to the nascent hyaluronan polymer. Therefore, it is essential to hyaluronan synthesis a major component of most extracellular matrices that has a structural role in tissues architectures and regulates cell adhesion, migration and differentiation. This is one of three isoenzymes responsible for cellular hyaluronan synthesis and it is particularly responsible for the synthesis of high molecular mass hyaluronan. In Xenopus laevis (African clawed frog), this protein is Hyaluronan synthase 2 (has2).